Reading from the N-terminus, the 146-residue chain is MQHTRRMLNPLLTGLRNLPARGATTTTAAAPAKVEKTVNTVTILGRVGADPQLRGSQEHPVVTFSVATHTNYKYENGDWAQRTDWHRVVVFKPNLRDTVLEYLKKGQRTMVQGKITYGEITDQQGNQKTSTSIIADDVLFFRDANN.

The N-terminal 22 residues, 1–22, are a transit peptide targeting the mitochondrion; sequence MQHTRRMLNPLLTGLRNLPARG. The SSB domain occupies 38–142; the sequence is VNTVTILGRV…IIADDVLFFR (105 aa).

As to quaternary structure, homotetramer. Uniformly distributed in the early embryo. High levels detected in the anterior and posterior midgut primordia of stage 12 embryos. In larvae, high levels were detected in proliferating tissues including the CNS and digestive tract. In adults, highly expressed in the CNS, digestive tract and ovary.

The protein localises to the mitochondrion. Binds preferentially and cooperatively to pyrimidine rich single-stranded DNA (ss-DNA). Required to maintain the copy number of mitochondrial DNA (mtDNA) and plays crucial roles during mtDNA replication that stimulate activity of the gamma complex polymerase PolG1/tam at the replication fork. Promotes PolG1 activity largely by organizing the template DNA and eliminating secondary structures to favor ss-DNA conformations that facilitate PolG1 activity. The polypeptide is Single-stranded DNA-binding protein, mitochondrial (mtSSB) (Drosophila melanogaster (Fruit fly)).